Reading from the N-terminus, the 127-residue chain is Large ribosomal subunit protein bL12 (127 aa).

The disordered stretch occupies residues 98–127; the sequence is PKPVKNGVSKEEAEEAKKQLVESGAEVEIK. The segment covering 105 to 117 has biased composition (basic and acidic residues); the sequence is VSKEEAEEAKKQL.

The protein belongs to the bacterial ribosomal protein bL12 family. As to quaternary structure, homodimer. Part of the ribosomal stalk of the 50S ribosomal subunit. Forms a multimeric L10(L12)X complex, where L10 forms an elongated spine to which 2 to 4 L12 dimers bind in a sequential fashion. Binds GTP-bound translation factors.

In terms of biological role, forms part of the ribosomal stalk which helps the ribosome interact with GTP-bound translation factors. Is thus essential for accurate translation. The protein is Large ribosomal subunit protein bL12 of Geobacter sulfurreducens (strain ATCC 51573 / DSM 12127 / PCA).